Reading from the N-terminus, the 139-residue chain is D-ribose pyranase (139 aa).

His20 functions as the Proton donor in the catalytic mechanism. Residues Asp28, His106, and 128–130 each bind substrate; that span reads YAN.

The protein belongs to the RbsD / FucU family. RbsD subfamily. In terms of assembly, homodecamer.

The protein resides in the cytoplasm. It catalyses the reaction beta-D-ribopyranose = beta-D-ribofuranose. Its pathway is carbohydrate metabolism; D-ribose degradation; D-ribose 5-phosphate from beta-D-ribopyranose: step 1/2. Functionally, catalyzes the interconversion of beta-pyran and beta-furan forms of D-ribose. This Edwardsiella ictaluri (strain 93-146) protein is D-ribose pyranase.